A 97-amino-acid polypeptide reads, in one-letter code: NADH-ubiquinone oxidoreductase chain 4L (97 aa).

Transmembrane regions (helical) follow at residues 1–21, 23–43, and 60–80; these read MALLIIILSMFYLGLMGILLN, LHFLSILLCLELLLISLFIGI, and LLLLTLSACEASIGLSLMVAL.

This sequence belongs to the complex I subunit 4L family.

It is found in the mitochondrion membrane. It carries out the reaction a ubiquinone + NADH + 5 H(+)(in) = a ubiquinol + NAD(+) + 4 H(+)(out). Its function is as follows. Core subunit of the mitochondrial membrane respiratory chain NADH dehydrogenase (Complex I) that is believed to belong to the minimal assembly required for catalysis. Complex I functions in the transfer of electrons from NADH to the respiratory chain. The immediate electron acceptor for the enzyme is believed to be ubiquinone. This chain is NADH-ubiquinone oxidoreductase chain 4L (ND4L), found in Paracentrotus lividus (Common sea urchin).